Here is a 489-residue protein sequence, read N- to C-terminus: Dihydropyrimidinase 1 (489 aa).

Residues His61, His63, and Lys156 each coordinate Zn(2+). Position 156 is an N6-carboxylysine (Lys156). Substrate is bound at residue Tyr161. 2 residues coordinate Zn(2+): His189 and His245. Ser295 contacts substrate. Asp323 is a Zn(2+) binding site. Position 344 (Asn344) interacts with substrate.

Belongs to the metallo-dependent hydrolases superfamily. Hydantoinase/dihydropyrimidinase family. In terms of assembly, homotetramer. Requires Zn(2+) as cofactor. Post-translationally, carboxylation allows a single lysine to coordinate two zinc ions.

The protein localises to the nucleus. It carries out the reaction 5,6-dihydrouracil + H2O = 3-(carbamoylamino)propanoate + H(+). In Caenorhabditis briggsae, this protein is Dihydropyrimidinase 1 (dhp-1).